A 113-amino-acid chain; its full sequence is uncharacterized protein (113 aa).

Residues M1–E19 are compositionally biased toward basic and acidic residues. Residues M1–S94 form a disordered region. Basic residues predominate over residues G20–S41. Over residues F52–S66 the composition is skewed to low complexity. Positions K75 to K92 are enriched in basic residues.

This is an uncharacterized protein from Macaca fascicularis (Crab-eating macaque).